We begin with the raw amino-acid sequence, 156 residues long: Small ribosomal subunit protein uS7 (156 aa).

Belongs to the universal ribosomal protein uS7 family. In terms of assembly, part of the 30S ribosomal subunit. Contacts proteins S9 and S11.

Its function is as follows. One of the primary rRNA binding proteins, it binds directly to 16S rRNA where it nucleates assembly of the head domain of the 30S subunit. Is located at the subunit interface close to the decoding center, probably blocks exit of the E-site tRNA. The protein is Small ribosomal subunit protein uS7 of Synechococcus sp. (strain CC9902).